The chain runs to 350 residues: Protein disulfide isomerase Creld2 (350 aa).

The first 22 residues, 1–22 (MHLLLAAAFGLLLLLPPPGAVA), serve as a signal peptide directing secretion. Residues 29–32 (CQRC) carry the CXXC motif. 4 disulfide bridges follow: Cys-29-Cys-32, Cys-138-Cys-152, Cys-146-Cys-164, and Cys-166-Cys-175. An EGF-like 1 domain is found at 134–176 (DCQECQGGSERPCSGNGYCSGDGSRQGDGSCQCHTGYKGPLCI). Residues 191–238 (HSICSACDESCKTCSGPSNKDCIQCEVGWARVEDACVDVDECAAETSP) form an FU 1 repeat. Asn-249 carries N-linked (GlcNAc...) asparagine glycosylation. One copy of the FU 2 repeat lies at 251–298 (SYTCEDCDSTCVGCTGKGPANCKECIAGYTKESGQCTDIDECSLEEKA). Residues 261–264 (CVGC) carry the CXXC motif. Disulfide bonds link Cys-261–Cys-264, Cys-292–Cys-306, Cys-299–Cys-315, and Cys-317–Cys-328. The EGF-like 2; calcium-binding domain maps to 288 to 329 (DIDECSLEEKACKRKNENCYNVPGSFVCVCPEGFEETEDACV).

It belongs to the CRELD family. Interacts with CHRNA4. Component of a complex containing at least CRELD2, MANF, MATN3 and PDIA4. As to expression, expressed in chondrocytes (at protein level).

The protein localises to the endoplasmic reticulum. It catalyses the reaction Catalyzes the rearrangement of -S-S- bonds in proteins.. In terms of biological role, protein disulfide isomerase. Might play a role in the unfolded protein response. May regulate transport of alpha4-beta2 neuronal acetylcholine receptor. The sequence is that of Protein disulfide isomerase Creld2 (Creld2) from Mus musculus (Mouse).